We begin with the raw amino-acid sequence, 306 residues long: RNA-binding protein Raly (306 aa).

The residue at position 2 (S2) is an N-acetylserine. K4 is covalently cross-linked (Glycyl lysine isopeptide (Lys-Gly) (interchain with G-Cter in SUMO2)). In terms of domain architecture, RRM spans 21-92; sequence SRVFIGNLNT…QTLDINMAGE (72 aa). Residue K44 is modified to N6-acetyllysine. S63 carries the phosphoserine modification. Glycyl lysine isopeptide (Lys-Gly) (interchain with G-Cter in SUMO2) cross-links involve residues K94 and K99. S106 and S135 each carry phosphoserine. K159 is covalently cross-linked (Glycyl lysine isopeptide (Lys-Gly) (interchain with G-Cter in SUMO2)). Residue K165 is modified to N6-acetyllysine; alternate. A Glycyl lysine isopeptide (Lys-Gly) (interchain with G-Cter in SUMO2); alternate cross-link involves residue K165. Residues K179 and K191 each participate in a glycyl lysine isopeptide (Lys-Gly) (interchain with G-Cter in SUMO2) cross-link. A coiled-coil region spans residues 183-216; it reads KSSELQAIKTELTQIKSNIDALLSRLEQIAAEQK. The disordered stretch occupies residues 215–306; that stretch reads QKANPDGKKK…DTDADDGALQ (92 aa). The span at 217 to 226 shows a compositional bias: basic and acidic residues; that stretch reads ANPDGKKKGD. Gly residues predominate over residues 227 to 252; that stretch reads GGGAGGGGGGGGSGGGGSGGGGGGGS. Residues 227–253 form an epitope (recognized by BKRF1 antibodies) region; that stretch reads GGGAGGGGGGGGSGGGGSGGGGGGGSS. The residue at position 262 (T262) is a Phosphothreonine. A Phosphoserine modification is found at S264. Position 286 is a phosphothreonine (T286). The segment covering 287–297 has biased composition (basic and acidic residues); it reads HSEEELEHSQD. Residues S288 and S295 each carry the phosphoserine modification. Position 298 is a phosphothreonine (T298).

The protein belongs to the RRM HNRPC family. RALY subfamily. In terms of assembly, identified in the spliceosome C complex. Interacts (through its RNA-binding domain) with FUS (through its RNA-binding domain); both are components of the same RNPs. Expressed in heart, brain, lung, liver, skeletal muscle, kidney and pancreas. Weakly expressed in placenta.

It is found in the nucleus. In terms of biological role, RNA-binding protein that acts as a transcriptional cofactor for cholesterol biosynthetic genes in the liver. Binds the lipid-responsive non-coding RNA LeXis and is required for LeXis-mediated effect on cholesterogenesis. May be a heterogeneous nuclear ribonucleoprotein (hnRNP). This chain is RNA-binding protein Raly (RALY), found in Homo sapiens (Human).